The following is a 252-amino-acid chain: 3-dehydroquinate dehydratase (252 aa).

3-dehydroquinate is bound by residues serine 21, 46-48 (EWR), and arginine 82. Residue histidine 143 is the Proton donor/acceptor of the active site. The active-site Schiff-base intermediate with substrate is lysine 170. Residues arginine 213, serine 232, and glutamine 236 each contribute to the 3-dehydroquinate site.

The protein belongs to the type-I 3-dehydroquinase family. Homodimer.

The enzyme catalyses 3-dehydroquinate = 3-dehydroshikimate + H2O. It functions in the pathway metabolic intermediate biosynthesis; chorismate biosynthesis; chorismate from D-erythrose 4-phosphate and phosphoenolpyruvate: step 3/7. Its function is as follows. Involved in the third step of the chorismate pathway, which leads to the biosynthesis of aromatic amino acids. Catalyzes the cis-dehydration of 3-dehydroquinate (DHQ) and introduces the first double bond of the aromatic ring to yield 3-dehydroshikimate. In Escherichia coli O9:H4 (strain HS), this protein is 3-dehydroquinate dehydratase.